A 135-amino-acid polypeptide reads, in one-letter code: MKDNSLLKMDHEDTHLGKVEIAPEVIEVIAGIAASEVDGVAEMRGNFATGVVERFGKVNHGKGVKVDLADDGITIDVYCVVTFGVSIPKVAASVQENIRQTLLNMTSLSINEINIHIVGIQFDTKAQEVQIDEEM.

This sequence belongs to the asp23 family.

This is an uncharacterized protein from Bacillus subtilis (strain 168).